Consider the following 1025-residue polypeptide: Multidrug resistance protein MdtC (1025 aa).

12 helical membrane passes run 3-23 (FFALFIYRPVATILLSVAITL), 333-353 (EVEQTLVISVALVILVVFLFL), 360-380 (IIPAVAVPVSLIGTFAAMYLC), 387-407 (LSLMALTIATGFVVDDAIVVL), 431-451 (VGFTVLSMSLSLVAVFLPLLL), 463-483 (FAVTLSVAIGISLLVSLTLTP), 528-548 (LVGAVLLGTIALNIWLYISIP), 853-873 (VILIIAAIATVYIVLGILYES), 875-895 (VHPLTILSTLPSAGVGALLAL), 897-917 (LFNAPFSLIALIGIMLLIGIV), 953-973 (PIMMTTLAALFGALPLVLSGG), and 984-1004 (ITIVGGLVMSQLLTLYTTPVV).

It belongs to the resistance-nodulation-cell division (RND) (TC 2.A.6) family. MdtC subfamily. In terms of assembly, part of a tripartite efflux system composed of MdtA, MdtB and MdtC. MdtC forms a heteromultimer with MdtB.

Its subcellular location is the cell inner membrane. Its function is as follows. The MdtABC tripartite complex confers resistance against novobiocin and deoxycholate. The sequence is that of Multidrug resistance protein MdtC from Escherichia coli O81 (strain ED1a).